Consider the following 693-residue polypeptide: Glycine--tRNA ligase beta subunit (693 aa).

Belongs to the class-II aminoacyl-tRNA synthetase family. As to quaternary structure, tetramer of two alpha and two beta subunits.

It is found in the cytoplasm. It carries out the reaction tRNA(Gly) + glycine + ATP = glycyl-tRNA(Gly) + AMP + diphosphate. The protein is Glycine--tRNA ligase beta subunit of Shouchella clausii (strain KSM-K16) (Alkalihalobacillus clausii).